The following is a 305-amino-acid chain: Ribonuclease H (305 aa).

It carries out the reaction Endonucleolytic cleavage to 5'-phosphomonoester.. In terms of biological role, plays essential roles in DNA replication by removing the RNA primers from lagging strand fragments. Exhibits 5'to 3' exonuclease activity on either RNA/DNA or DNA/DNA duplexes and endonuclease activity on either flap or fork DNA structures. This Enterobacteria phage T4 (Bacteriophage T4) protein is Ribonuclease H (rnh).